A 201-amino-acid polypeptide reads, in one-letter code: Glycerol-3-phosphate acyltransferase (201 aa).

5 helical membrane passes run 5–25 (LLGA…FGVV), 55–75 (KMGV…ILVA), 87–107 (FWVT…VWLG), 118–138 (LGIF…GYAV), and 164–184 (TYGP…LIFV).

It belongs to the PlsY family. As to quaternary structure, probably interacts with PlsX.

It localises to the cell inner membrane. It catalyses the reaction an acyl phosphate + sn-glycerol 3-phosphate = a 1-acyl-sn-glycero-3-phosphate + phosphate. It functions in the pathway lipid metabolism; phospholipid metabolism. In terms of biological role, catalyzes the transfer of an acyl group from acyl-phosphate (acyl-PO(4)) to glycerol-3-phosphate (G3P) to form lysophosphatidic acid (LPA). This enzyme utilizes acyl-phosphate as fatty acyl donor, but not acyl-CoA or acyl-ACP. The sequence is that of Glycerol-3-phosphate acyltransferase from Anaeromyxobacter dehalogenans (strain 2CP-1 / ATCC BAA-258).